We begin with the raw amino-acid sequence, 543 residues long: T-complex protein 1 subunit eta (543 aa).

Met1 carries the N-acetylmethionine modification. Gly41 contributes to the ADP binding site. Gly41 is an ATP binding site. Residue Lys67 is modified to N6-acetyllysine. Mg(2+) is bound at residue Asp92. Residues Gly93, Thr94, Thr95, Ser96, Ser164, and Ser165 each contribute to the ADP site. Gly93 contributes to the ATP binding site. Residue Ser96 coordinates ATP. N6-acetyllysine is present on residues Lys250 and Lys320. Residues Arg398 and Gly409 each coordinate ATP. Gly409 contacts ADP. Residue Lys430 forms a Glycyl lysine isopeptide (Lys-Gly) (interchain with G-Cter in SUMO2) linkage. Residues Glu494 and Arg499 each coordinate ADP. An ATP-binding site is contributed by Arg499. Residues 524 to 543 (RSTVDASPAAGRGRGRGRLH) are disordered. Arg535 is subject to Omega-N-methylarginine.

Belongs to the TCP-1 chaperonin family. As to quaternary structure, component of the chaperonin-containing T-complex (TRiC), a hexadecamer composed of two identical back-to-back stacked rings enclosing a protein folding chamber. Each ring is made up of eight different subunits: TCP1/CCT1, CCT2, CCT3, CCT4, CCT5, CCT6A/CCT6, CCT7, CCT8. Interacts with PACRG. Interacts with DLEC1.

Its subcellular location is the cytoplasm. It carries out the reaction ATP + H2O = ADP + phosphate + H(+). Component of the chaperonin-containing T-complex (TRiC), a molecular chaperone complex that assists the folding of actin, tubulin and other proteins upon ATP hydrolysis. The TRiC complex mediates the folding of WRAP53/TCAB1, thereby regulating telomere maintenance. This is T-complex protein 1 subunit eta (CCT7) from Bos taurus (Bovine).